The following is a 458-amino-acid chain: cAMP-dependent protein kinase regulatory subunit (458 aa).

The tract at residues 28-222 (QFAANYFNKK…GLESAVGKNF (195 aa)) is dimerization and phosphorylation. The residue at position 184 (Ser-184) is a Phosphoserine. 3',5'-cyclic AMP-binding positions include 223-338 (LFNK…FLKS), Glu-288, Arg-297, 341-457 (LLKS…RADK), Glu-407, and Arg-416.

It belongs to the cAMP-dependent kinase regulatory chain family. As to quaternary structure, tetramer, composed of 2 regulatory (R) and 2 catalytic (C) subunits. In the presence of cAMP it dissociates into 2 active monomeric C subunits and an R dimer.

The protein is cAMP-dependent protein kinase regulatory subunit (PKAR) of Eremothecium gossypii (strain ATCC 10895 / CBS 109.51 / FGSC 9923 / NRRL Y-1056) (Yeast).